A 143-amino-acid polypeptide reads, in one-letter code: Large ribosomal subunit protein uL15 (143 aa).

Residues 1-51 (MELNGIKPAAGAKHAKRRVGRGIGSGIGKTAGRGHKGQKSRAGGFHKVGFE) are disordered. Over residues 21–31 (RGIGSGIGKTA) the composition is skewed to gly residues.

This sequence belongs to the universal ribosomal protein uL15 family. Part of the 50S ribosomal subunit.

In terms of biological role, binds to the 23S rRNA. The protein is Large ribosomal subunit protein uL15 of Variovorax paradoxus (strain S110).